Here is a 1046-residue protein sequence, read N- to C-terminus: uncharacterized protein (1046 aa).

Positions 594–615 (LNSIPSDSSSSGSSRKSSPRGS) are enriched in low complexity. The segment at 594 to 622 (LNSIPSDSSSSGSSRKSSPRGSPNLGEAP) is disordered.

This is an uncharacterized protein from Invertebrate iridescent virus 6 (IIV-6).